We begin with the raw amino-acid sequence, 76 residues long: Lividin-2 (76 aa).

The N-terminal stretch at 1–22 (MFTLKKSLLLLFFLGTISLSLC) is a signal peptide. The propeptide occupies 23-41 (QEERNADEEDGGEVTEEEV). C70 and C76 are disulfide-bonded.

As to expression, expressed by the skin glands.

The protein localises to the secreted. In terms of biological role, antimicrobial peptide. This chain is Lividin-2, found in Odorrana livida (Green mountain frog).